The chain runs to 562 residues: Pyruvate kinase isozyme G, chloroplastic (562 aa).

Substrate is bound at residue Arg-121. K(+) is bound by residues Asn-123, Ser-125, Asp-156, and Thr-157. An ATP-binding site is contributed by 123–126 (NMSH). Glu-308 provides a ligand contact to Mg(2+). Residues Gly-331, Asp-332, and Thr-364 each coordinate substrate. Asp-332 contacts Mg(2+).

Belongs to the pyruvate kinase family. Homotetramer. Mg(2+) serves as cofactor. The cofactor is K(+). In terms of tissue distribution, highest levels in leaves. Also found in stems, roots and flowers.

Its subcellular location is the plastid. It localises to the chloroplast. The enzyme catalyses pyruvate + ATP = phosphoenolpyruvate + ADP + H(+). Its pathway is carbohydrate degradation; glycolysis; pyruvate from D-glyceraldehyde 3-phosphate: step 5/5. This is Pyruvate kinase isozyme G, chloroplastic from Nicotiana tabacum (Common tobacco).